The following is a 655-amino-acid chain: p-hydroxybenzoic acid efflux pump subunit AaeB (655 aa).

Residues Met-1–Arg-12 lie on the Periplasmic side of the membrane. The helical transmembrane segment at Phe-13–Leu-33 threads the bilayer. The Cytoplasmic portion of the chain corresponds to Glu-34 to Arg-37. Residues Trp-38 to Pro-58 traverse the membrane as a helical segment. The Periplasmic segment spans residues Tyr-59–Met-68. Residues Leu-69–Ile-89 form a helical membrane-spanning segment. The Cytoplasmic segment spans residues Arg-90 to Pro-92. A helical membrane pass occupies residues Leu-93 to Val-113. The Periplasmic segment spans residues Arg-114 to Ala-120. The chain crosses the membrane as a helical span at residues Trp-121 to Leu-141. The Cytoplasmic segment spans residues Thr-142–Ser-151. A helical membrane pass occupies residues Glu-152–Ile-172. The Periplasmic portion of the chain corresponds to Lys-173–Thr-369. Residues Leu-370–Val-390 traverse the membrane as a helical segment. Residues Thr-391 to Asp-406 lie on the Cytoplasmic side of the membrane. A helical membrane pass occupies residues Phe-407 to Pro-427. Residues Asn-428–Gln-430 lie on the Periplasmic side of the membrane. The chain crosses the membrane as a helical span at residues Gln-431 to Val-451. At Gln-452–Ser-458 the chain is on the cytoplasmic side. The helical transmembrane segment at Met-459–Phe-479 threads the bilayer. The Periplasmic portion of the chain corresponds to Ser-480–Gln-481. The chain crosses the membrane as a helical span at residues Phe-482 to Leu-502. At Val-503–Ser-655 the chain is on the cytoplasmic side.

This sequence belongs to the aromatic acid exporter ArAE (TC 2.A.85) family.

The protein resides in the cell inner membrane. In terms of biological role, forms an efflux pump with AaeA. Could function as a metabolic relief valve, allowing to eliminate certain compounds when they accumulate to high levels in the cell. The protein is p-hydroxybenzoic acid efflux pump subunit AaeB of Salmonella paratyphi A (strain ATCC 9150 / SARB42).